A 472-amino-acid chain; its full sequence is Cell division protein FtsP (472 aa).

Residues Met-1 to Ala-32 constitute a signal peptide (tat-type signal).

It belongs to the FtsP family. In terms of processing, predicted to be exported by the Tat system. The position of the signal peptide cleavage has not been experimentally proven.

The protein resides in the periplasm. Its function is as follows. Cell division protein that is required for growth during stress conditions. May be involved in protecting or stabilizing the divisomal assembly under conditions of stress. The polypeptide is Cell division protein FtsP (Edwardsiella tarda (strain FL6-60)).